Here is a 166-residue protein sequence, read N- to C-terminus: PTS system glucose-specific EIIA component (166 aa).

The PTS EIIA type-1 domain maps to 34–138 (DPVFAQKMMG…SVISPIIITN (105 aa)). Residues His-71 and His-86 each contribute to the Zn(2+) site. His-86 serves as the catalytic Tele-phosphohistidine intermediate; for EIIA activity. His-86 is subject to Phosphohistidine; by HPr.

In terms of assembly, heterodimer with glycerol kinase (glpk). It depends on Zn(2+) as a cofactor.

It is found in the cytoplasm. In terms of biological role, the phosphoenolpyruvate-dependent sugar phosphotransferase system (sugar PTS), a major carbohydrate active transport system, catalyzes the phosphorylation of incoming sugar substrates concomitantly with their translocation across the cell membrane. The enzyme II complex composed of PtsG and Crr is involved in glucose transport. The protein is PTS system glucose-specific EIIA component (crr) of Staphylococcus aureus (strain MRSA252).